We begin with the raw amino-acid sequence, 854 residues long: Disrupted in schizophrenia 1 protein (854 aa).

Over residues 1-18 the composition is skewed to gly residues; the sequence is MPGGGPQGAPAAAGGGGV. 4 disordered regions span residues 1–24, 179–205, 221–257, and 278–323; these read MPGG…RAGS, SAEL…SHSA, GERG…GPHE, and AQAA…SGDA. The interaction with MAP1A stretch occupies residues 1–292; it reads MPGGGPQGAP…NSSRPERDMH (292 aa). The Interaction with FBXW7 motif lies at 197–203; it reads PTPPGSH. Residues 285-295 show a composition bias toward basic and acidic residues; that stretch reads SRPERDMHSLP. Residues 293-696 form an interaction with TRAF3IP1 region; that stretch reads SLPDMDPGSS…LGKVWEADLE (404 aa). Positions 296–309 are enriched in low complexity; it reads DMDPGSSSSLDPSL. 3 coiled-coil regions span residues 366 to 394, 452 to 505, and 602 to 666; these read ENDD…HFQL, ITRR…CDLT, and WTAK…SVKE. Lys372 participates in a covalent cross-link: Glycyl lysine isopeptide (Lys-Gly) (interchain with G-Cter in ubiquitin). The segment at 440 to 597 is required for localization to punctate cytoplasmic foci; sequence LEPTAQDSLH…LLEAKMHAIS (158 aa). A necessary and sufficient for interaction with PCNT and localization at the centrosome region spans residues 446–854; it reads DSLHVSITRR…MTAGVHEAQA (409 aa). The tract at residues 598 to 854 is interaction with ATF4 and ATF5; that stretch reads GNHFWTAKDL…MTAGVHEAQA (257 aa). Residues 716–739 are disordered; that stretch reads VEDERQMDDLEGAAPPIPPRLHSE. The segment at 727-854 is interaction with PAFAH1B1; sequence GAAPPIPPRL…MTAGVHEAQA (128 aa). Residues 802–830 are a coiled coil; the sequence is SHDEDLIQSLRRELQMVKETLQAMILQLQ. The interval 802–835 is interaction with NDEL1; it reads SHDEDLIQSLRRELQMVKETLQAMILQLQPAKEA.

As to quaternary structure, interacts with NDEL1. Interacts with CCDC88A (via C-terminus); the interaction is direct. Interacts with GSK3B. Interacts with tubulin alpha, ACTN2, ANKHD1, ATF4, ATF5, CEP63, EIF3S3, MAP1A, NDEL1, PAFAH1B1, RANBP9, SPTBN4, SYNE1 and TRAF3IP1. Interaction with microtubules may be mediated in part by TRAF3IP1. Interacts (via C-terminal) with PCNT. Interacts with CHCHD6. Interacts with CCDC141. Interacts with FBXW7, the substrate-recognition component of a SCF (SKP1-CUL1-F-box protein) E3 ubiquitin-protein ligase complex; the interaction targets DISC1 for proteasomal degradation. Interacts with ZNF365. Interacts with ATF4; inhibiting ATF4 transcription factor activity by disrupting ATF4 dimerization and DNA-binding. Interacts with PDE4B (isoform PDE4B5). In terms of processing, ubiquitinated. Ubiquitination with 'Lys-48'-linked polyubiquitin chains leads to its proteasomal degradation. In terms of tissue distribution, ubiquitous. Highly expressed in the dentate gyrus of the hippocampus. Also expressed in the temporal and parahippocampal cortices and cells of the white matter.

Its subcellular location is the cytoplasm. The protein resides in the cytoskeleton. It is found in the mitochondrion. The protein localises to the microtubule organizing center. It localises to the centrosome. Its subcellular location is the postsynaptic density. Functionally, involved in the regulation of multiple aspects of embryonic and adult neurogenesis. Required for neural progenitor proliferation in the ventrical/subventrical zone during embryonic brain development and in the adult dentate gyrus of the hippocampus. Participates in the Wnt-mediated neural progenitor proliferation as a positive regulator by modulating GSK3B activity and CTNNB1 abundance. Plays a role as a modulator of the AKT-mTOR signaling pathway controlling the tempo of the process of newborn neurons integration during adult neurogenesis, including neuron positioning, dendritic development and synapse formation. Inhibits the activation of AKT-mTOR signaling upon interaction with CCDC88A. Regulates the migration of early-born granule cell precursors toward the dentate gyrus during the hippocampal development. Inhibits ATF4 transcription factor activity in neurons by disrupting ATF4 dimerization and DNA-binding. Plays a role, together with PCNT, in the microtubule network formation. This Homo sapiens (Human) protein is Disrupted in schizophrenia 1 protein.